The chain runs to 524 residues: Inorganic phosphate transporter 1-1 (524 aa).

The Cytoplasmic segment spans residues 1–24; the sequence is MAEQQLGVLKALDVAKTQLYHFTA. The chain crosses the membrane as a helical span at residues 25–45; sequence IVIAGMGFFTDAYDLFCVSLV. The Extracellular portion of the chain corresponds to 46-70; the sequence is TKLLGRIYYFNPESAKPGSLPPHVA. The chain crosses the membrane as a helical span at residues 71-91; the sequence is AAVNGVALCGTLSGQLFFGWL. Residues 92-99 lie on the Cytoplasmic side of the membrane; that stretch reads GDKLGRKK. Residues 100–120 form a helical membrane-spanning segment; sequence VYGLTLVMMILCSVASGLSFG. Residues 121–131 lie on the Extracellular side of the membrane; the sequence is HEAKGVMTTLC. A helical membrane pass occupies residues 132–152; that stretch reads FFRFWLGFGIGGDYPLSATIM. The Cytoplasmic portion of the chain corresponds to 153 to 161; that stretch reads SEYANKKTR. A helical transmembrane segment spans residues 162–182; it reads GAFIAAVFAMQGVGILAGGFV. Over 183-211 the chain is Extracellular; sequence ALAVSSIFDKKFPAPTYAVNRALSTPPQV. Residues 212-232 traverse the membrane as a helical segment; sequence DYIWRIIVMFGALPAALTYYW. The Cytoplasmic portion of the chain corresponds to 233–292; sequence RMKMPETARYTALVAKNIKQATADMSKVLQTDIELEERVEDDVKDPKQNYGLFSKEFLRR. A helical membrane pass occupies residues 293–313; that stretch reads HGLHLLGTTSTWFLLDIAFYS. The Extracellular segment spans residues 314–348; it reads QNLFQKDIFSAIGWIPKAATMNATHEVFRIARAQT. A helical transmembrane segment spans residues 349 to 369; that stretch reads LIALCSTVPGYWFTVAFIDTI. At 370–371 the chain is on the cytoplasmic side; sequence GR. A helical transmembrane segment spans residues 372–392; that stretch reads FKIQLNGFFMMTVFMFAIAFP. Residues 393–402 lie on the Extracellular side of the membrane; sequence YNHWIKPENR. The helical transmembrane segment at 403-423 threads the bilayer; that stretch reads IGFVVMYSLTFFFANFGPNAT. At 424–441 the chain is on the cytoplasmic side; the sequence is TFIVPAEIFPARLRSTCH. The helical transmembrane segment at 442–462 threads the bilayer; the sequence is GISAAAGKAGAIVGAFGFLYA. Residues 463-484 lie on the Extracellular side of the membrane; the sequence is AQSQDKAKVDAGYPPGIGVKNS. The helical transmembrane segment at 485-505 threads the bilayer; it reads LIMLGVLNFIGMLFTFLVPEP. The Cytoplasmic portion of the chain corresponds to 506–524; it reads KGKSLEELSGEAEVSHDEK.

It belongs to the major facilitator superfamily. Phosphate:H(+) symporter (TC 2.A.1.9) family. Interacts with NLA. In terms of processing, ubiquitinated by NLA. Ubiquitination of PHT1-1 leads to its degradation by the proteasome. In terms of tissue distribution, mostly expressed in roots, especially in trichoblasts and in emerging secondary roots and root hairs, but not in root tips. Also present in hydathodes, axillary buds and peripheral endosperm of germinating seeds.

Its subcellular location is the cell membrane. With respect to regulation, inhibited by protonophores (e.g. 2,4-dinitrophenol and carbonylcyanide m-chlorophenylhydrazone), the plasma membrane H(+)-ATPase inhibitor diethylstilbestorol, and the phosphate analog arsenate. Its function is as follows. High-affinity transporter for external inorganic phosphate. Acts as a H(+):phosphate symporter in both low- and high-Pi conditions. Confers sensitivity to arsenate. The sequence is that of Inorganic phosphate transporter 1-1 (PHT1-1) from Arabidopsis thaliana (Mouse-ear cress).